The sequence spans 152 residues: Transcriptional regulator MraZ (152 aa).

2 consecutive SpoVT-AbrB domains span residues 5-52 (AHAI…PLCE) and 81-124 (ASEC…SETR).

The protein belongs to the MraZ family. In terms of assembly, forms oligomers.

The protein localises to the cytoplasm. It is found in the nucleoid. The sequence is that of Transcriptional regulator MraZ from Tolumonas auensis (strain DSM 9187 / NBRC 110442 / TA 4).